Reading from the N-terminus, the 323-residue chain is MLGFITRPPHQLLCTGYRLLRTPVLCTQPRPRTMSSSTSWELPLVAVCQVTSTPNKQENFKTCAELVQEAARLGACLAFLPEAFDFIARNPAETLLLSEPLNGDLLGQYSQLARECGIWLSLGGFHERGQDWEQNQKIYNCHVLLNSKGSVVASYRKTHLCDVEIPGQGPMRESNYTKPGGTLEPPVKTPAGKVGLAICYDMRFPELSLKLAQAGAEILTYPSAFGSVTGPAHWEVLLRARAIESQCYVIAAAQCGRHHETRASYGHSMVVDPWGTVVARCSEGPGLCLARIDLHFLQQMRQHLPVFQHRRPDLYGSLGHPLS.

Residues 1–33 constitute a mitochondrion transit peptide; the sequence is MLGFITRPPHQLLCTGYRLLRTPVLCTQPRPRT. The CN hydrolase domain maps to 42–294; it reads LPLVAVCQVT…PGLCLARIDL (253 aa). Glu-82 acts as the Proton acceptor in catalysis. Lys-157 (proton donor) is an active-site residue. Cys-199 functions as the Nucleophile in the catalytic mechanism.

This sequence belongs to the carbon-nitrogen hydrolase superfamily. NIT1/NIT2 family. As to expression, expressed in most tissues with higher expression in adult liver and kidney as well as in fetal adrenal gland and skeletal muscle.

The protein localises to the mitochondrion. It localises to the cytoplasm. It carries out the reaction N-(4-oxoglutaryl)-L-cysteinylglycine + H2O = L-cysteinylglycine + 2-oxoglutarate. The enzyme catalyses N-(4-carboxy-4-oxobutanoyl)-L-ethylglycylglycine + H2O = N-(2-aminobutanoyl)glycine + 2-oxoglutarate. In terms of biological role, catalyzes the hydrolysis of the amide bond in N-(4-oxoglutarate)-L-cysteinylglycine (deaminated glutathione), a metabolite repair reaction to dispose of the harmful deaminated glutathione. Possesses amidase activity toward deaminated ophthalmate in vitro. Plays a role in cell growth and apoptosis: loss of expression promotes cell growth, resistance to DNA damage stress and increased incidence to NMBA-induced tumors. Has tumor suppressor properties that enhances the apoptotic responsiveness in cancer cells; this effect is additive to the tumor suppressor activity of FHIT. It is also a negative regulator of primary T-cells. This is Deaminated glutathione amidase from Mus musculus (Mouse).